The following is a 919-amino-acid chain: Puromycin-sensitive aminopeptidase (919 aa).

Substrate is bound by residues Glu180 and 316–320; that span reads GAMEN. Residue His352 participates in Zn(2+) binding. Catalysis depends on Glu353, which acts as the Proton acceptor. Zn(2+) contacts are provided by His356 and Glu375. Tyr464 is subject to 3'-nitrotyrosine. Positions 726–730 match the Nuclear localization signal motif; the sequence is RRRFK.

The protein belongs to the peptidase M1 family. As to quaternary structure, monomer. The cofactor is Zn(2+). In terms of tissue distribution, detected in liver, epithelium of renal tubules, epithelium of small and large intestine, gastric epithelial cells, and alveoli of the lung (at protein level).

Its subcellular location is the cytoplasm. It is found in the cytosol. The protein resides in the nucleus. The catalysed reaction is Release of an N-terminal amino acid, preferentially alanine, from a wide range of peptides, amides and arylamides.. Its activity is regulated as follows. Strongly inhibited by bestatin, leuhistin, actinonin, amastatin, 1,10-phenanthroline, DFP, PCMBS, Zn(2+), Cd(2+), Co(2+), Cu(2+), Hg(2+), EDTA and puromycin. Not inhibited by PMSF, and only slightly inhibited by leupeptin and aprotinin. Activity is increased by Mg(2+) and Ca(2+). Its function is as follows. Aminopeptidase with broad substrate specificity for several peptides. Involved in proteolytic events essential for cell growth and viability. May act as regulator of neuropeptide activity. Plays a role in the antigen-processing pathway for MHC class I molecules. Involved in the N-terminal trimming of cytotoxic T-cell epitope precursors. Digests the poly-Q peptides found in many cellular proteins. Digests tau from normal brain more efficiently than tau from Alzheimer disease brain. This is Puromycin-sensitive aminopeptidase (NPEPPS) from Homo sapiens (Human).